Here is a 469-residue protein sequence, read N- to C-terminus: 3-isopropylmalate dehydratase large subunit (469 aa).

Positions 347, 407, and 410 each coordinate [4Fe-4S] cluster.

It belongs to the aconitase/IPM isomerase family. LeuC type 1 subfamily. In terms of assembly, heterodimer of LeuC and LeuD. [4Fe-4S] cluster serves as cofactor.

It carries out the reaction (2R,3S)-3-isopropylmalate = (2S)-2-isopropylmalate. It participates in amino-acid biosynthesis; L-leucine biosynthesis; L-leucine from 3-methyl-2-oxobutanoate: step 2/4. Functionally, catalyzes the isomerization between 2-isopropylmalate and 3-isopropylmalate, via the formation of 2-isopropylmaleate. The polypeptide is 3-isopropylmalate dehydratase large subunit (Proteus mirabilis (strain HI4320)).